The chain runs to 936 residues: Protocadherin alpha-5 (936 aa).

Residues 1 to 28 form the signal peptide; that stretch reads MVYSRRGSLGSRLLLLWLLLAYWKAGSG. The Extracellular portion of the chain corresponds to 29–696; it reads QLHYSIPEEA…GPEAALVDVN (668 aa). Cadherin domains lie at 33-132, 156-241, 242-349, 350-454, 455-564, and 580-677; these read SIPE…PPRF, ASDL…APEF, DKSI…TPEM, AITT…LRAF, AQPQ…APAL, and VPRS…APKA. Residues Asn-264, Asn-448, and Asn-547 are each glycosylated (N-linked (GlcNAc...) asparagine). A helical transmembrane segment spans residues 697–717; that stretch reads VYLIIAICAVSSLLVLTLLLY. At 718–936 the chain is on the cytoplasmic side; sequence TALRCSAQPT…GNSTTDNSDQ (219 aa). Disordered stretches follow at residues 759–793, 815–875, and 887–936; these read SGEA…PDWR, RAGP…DKFI, and QEPA…NSDQ. 5 PXXP repeats span residues 773–776, 785–788, 818–821, 873–876, and 877–890; these read PSLP, PRQP, PGGP, KFII, and PGSP…QEPA. Positions 773-890 are 5 X 4 AA repeats of P-X-X-P; sequence PSLPQGPTST…AIISIRQEPA (118 aa). Over residues 774–786 the composition is skewed to polar residues; it reads SLPQGPTSTDNPR. Over residues 895-909 the composition is skewed to basic and acidic residues; sequence DKSDFITFGKKEETK.

It localises to the cell membrane. Its function is as follows. Potential calcium-dependent cell-adhesion protein. May be involved in the establishment and maintenance of specific neuronal connections in the brain. The chain is Protocadherin alpha-5 (PCDHA5) from Pan troglodytes (Chimpanzee).